A 625-amino-acid chain; its full sequence is Isocitrate dehydrogenase kinase/phosphatase (625 aa).

Residues 325-331 (APGIKGM) and lysine 346 contribute to the ATP site. The active site involves aspartate 381. The segment at 596-625 (RRHSPGRNDHELLTHLPPEPMLTGLSGMTP) is disordered.

It belongs to the AceK family.

It is found in the cytoplasm. It carries out the reaction L-seryl-[isocitrate dehydrogenase] + ATP = O-phospho-L-seryl-[isocitrate dehydrogenase] + ADP + H(+). Bifunctional enzyme which can phosphorylate or dephosphorylate isocitrate dehydrogenase (IDH) on a specific serine residue. This is a regulatory mechanism which enables bacteria to bypass the Krebs cycle via the glyoxylate shunt in response to the source of carbon. When bacteria are grown on glucose, IDH is fully active and unphosphorylated, but when grown on acetate or ethanol, the activity of IDH declines drastically concomitant with its phosphorylation. The protein is Isocitrate dehydrogenase kinase/phosphatase of Polaromonas sp. (strain JS666 / ATCC BAA-500).